The sequence spans 361 residues: Histidinol-phosphate aminotransferase (361 aa).

N6-(pyridoxal phosphate)lysine is present on K223.

This sequence belongs to the class-II pyridoxal-phosphate-dependent aminotransferase family. Histidinol-phosphate aminotransferase subfamily. Homodimer. It depends on pyridoxal 5'-phosphate as a cofactor.

The enzyme catalyses L-histidinol phosphate + 2-oxoglutarate = 3-(imidazol-4-yl)-2-oxopropyl phosphate + L-glutamate. It participates in amino-acid biosynthesis; L-histidine biosynthesis; L-histidine from 5-phospho-alpha-D-ribose 1-diphosphate: step 7/9. This is Histidinol-phosphate aminotransferase from Deinococcus radiodurans (strain ATCC 13939 / DSM 20539 / JCM 16871 / CCUG 27074 / LMG 4051 / NBRC 15346 / NCIMB 9279 / VKM B-1422 / R1).